Reading from the N-terminus, the 120-residue chain is Chaperonin GroEL (120 aa).

23 to 27 (DGTTT) serves as a coordination point for ATP.

This sequence belongs to the chaperonin (HSP60) family. As to quaternary structure, forms a cylinder of 14 subunits composed of two heptameric rings stacked back-to-back. Interacts with the co-chaperonin GroES.

Its subcellular location is the cytoplasm. It carries out the reaction ATP + H2O + a folded polypeptide = ADP + phosphate + an unfolded polypeptide.. Together with its co-chaperonin GroES, plays an essential role in assisting protein folding. The GroEL-GroES system forms a nano-cage that allows encapsulation of the non-native substrate proteins and provides a physical environment optimized to promote and accelerate protein folding. The polypeptide is Chaperonin GroEL (Mycolicibacterium vaccae (Mycobacterium vaccae)).